Here is a 258-residue protein sequence, read N- to C-terminus: Immediate-early protein IE-0 (258 aa).

The RING-type zinc finger occupies 191–237 (CNICEDSSAEEQFLKPNVCCGYRVCNACYAKLWEFCTGAYPVCPICK).

In Lymantria dispar multicapsid nuclear polyhedrosis virus (LdMNPV), this protein is Immediate-early protein IE-0 (IE-0).